Consider the following 840-residue polypeptide: Putative pentatricopeptide repeat-containing protein At1g31840 (840 aa).

PPR repeat units follow at residues 98-128 (KDPS…MITN), 145-179 (DADV…GVVI), 180-214 (PQDS…GIEP), 216-250 (GVSA…GFRV), 251-284 (GIVS…GPAP), 285-319 (NVVT…GIEP), 320-354 (DLIA…GVKL), 355-389 (DVVV…GISP), 390-424 (NVVT…GMEP), 425-459 (SIVT…GYPP), 460-494 (DVVI…SIRL), 495-529 (NVVV…GIKP), 530-564 (DVAT…GLEP), 565-599 (DALA…KISA), 600-634 (DIAV…KMEP), 635-669 (DIVT…PFGP), 670-704 (NTVT…GSKP), 705-739 (NAVT…GISP), 740-774 (SIVS…KLLP), and 775-809 (DVVA…GVKP).

It belongs to the PPR family. P subfamily.

The polypeptide is Putative pentatricopeptide repeat-containing protein At1g31840 (Arabidopsis thaliana (Mouse-ear cress)).